The sequence spans 339 residues: DNA-directed RNA polymerase RPB7 homolog (339 aa).

It belongs to the Asfivirus DNA-directed RNA polymerase RPB7 homolog family. Part of the viral DNA-directed RNA polymerase that consists of 8 polII-like subunits (RPB1, RPB2, RPB3, RPB5, RPB6, RPB7, RPB9, RPB10), a capping enzyme and a termination factor.

It localises to the host cytoplasm. The protein resides in the virion. Its function is as follows. Component of the DNA-directed RNA polymerase (RNAP) that catalyzes the transcription in the cytoplasm of viral DNA into RNA using the four ribonucleoside triphosphates as substrates. In African swine fever virus (strain Badajoz 1971 Vero-adapted) (Ba71V), this protein is DNA-directed RNA polymerase RPB7 homolog.